Here is a 710-residue protein sequence, read N- to C-terminus: E3 ubiquitin-protein ligase TRIM9 (710 aa).

The RING-type zinc-finger motif lies at 10–50 (CPVCGSFYREPIILPCSHNLCQACARNILVQTPESESPQSH). T41 carries the phosphothreonine modification. 3 positions are modified to phosphoserine: S44, S46, and S49. 2 B box-type zinc fingers span residues 163–212 (AAAL…LVPP) and 224–266 (RKVS…VKAL). The Zn(2+) site is built by C168, C171, C193, H198, C229, H232, C252, and H258. Residues 273–340 (HKSQLSQALN…KAQLLARVNK (68 aa)) are a coiled coil. The 59-residue stretch at 374 to 432 (IKENDPSGFLQISDALIRRVHLTEDQWGKGTLTPRMTTDFDLSLDNSPLLQSIHQLDFV) folds into the COS domain. The Fibronectin type-III domain occupies 440–535 (VPATPILQLE…KTLVLQTSEV (96 aa)). In terms of domain architecture, B30.2/SPRY spans 533–702 (SEVAWFAFDP…LHTGLPVPDF (170 aa)).

Belongs to the TRIM/RBCC family. Interacts with SNAP25. In terms of processing, auto-ubiquitinated. Poly-ubiquitinated in cultured cells, whereas it is monoubiquitinated in vitro. Brain. Highly expressed in the cerebral cortex (at protein level). Severely decreased in the affected brain areas in Parkinson disease and dementia with Lewy bodies.

The protein localises to the cytoplasm. It localises to the cell projection. The protein resides in the dendrite. Its subcellular location is the cytoplasmic vesicle. It is found in the secretory vesicle. The protein localises to the synaptic vesicle. It localises to the synapse. The protein resides in the cytoskeleton. It catalyses the reaction S-ubiquitinyl-[E2 ubiquitin-conjugating enzyme]-L-cysteine + [acceptor protein]-L-lysine = [E2 ubiquitin-conjugating enzyme]-L-cysteine + N(6)-ubiquitinyl-[acceptor protein]-L-lysine.. It participates in protein modification; protein ubiquitination. Its function is as follows. E3 ubiquitin-protein ligase which ubiquitinates itself in cooperation with an E2 enzyme UBE2D2/UBC4 and serves as a targeting signal for proteasomal degradation. May play a role in regulation of neuronal functions and may also participate in the formation or breakdown of abnormal inclusions in neurodegenerative disorders. May act as a regulator of synaptic vesicle exocytosis by controlling the availability of SNAP25 for the SNARE complex formation. The sequence is that of E3 ubiquitin-protein ligase TRIM9 (TRIM9) from Homo sapiens (Human).